A 389-amino-acid polypeptide reads, in one-letter code: Chalcone synthase 5 (389 aa).

Residue Cys164 is part of the active site.

It belongs to the thiolase-like superfamily. Chalcone/stilbene synthases family.

The enzyme catalyses (E)-4-coumaroyl-CoA + 3 malonyl-CoA + 3 H(+) = 2',4,4',6'-tetrahydroxychalcone + 3 CO2 + 4 CoA. The protein operates within secondary metabolite biosynthesis; flavonoid biosynthesis. In terms of biological role, the primary product of this enzyme is 4,2',4',6'-tetrahydroxychalcone (also termed naringenin-chalcone or chalcone) which can under specific conditions spontaneously isomerize into naringenin. This Trifolium subterraneum (Subterranean clover) protein is Chalcone synthase 5 (CHS5).